The chain runs to 489 residues: Beta-1,3-glucosyltransferase (489 aa).

A topological domain (cytoplasmic) is located at residue Met1. Residues 2-22 (RPPALLALFSCSAAFALMSEE) form a helical; Signal-anchor for type II membrane protein membrane-spanning segment. Topologically, residues 23–489 (IKEKVTPSQD…ETQKDPREEL (467 aa)) are lumenal. A glycan (N-linked (GlcNAc...) asparagine) is linked at Asn78. The short motif at 486-489 (REEL) is the Prevents secretion from ER element.

It belongs to the glycosyltransferase 31 family.

It is found in the endoplasmic reticulum membrane. The protein operates within protein modification; protein glycosylation. O-glucosyltransferase that transfers glucose toward fucose with a beta-1,3 linkage. Specifically glucosylates O-linked fucosylglycan on TSP type-1 domains of proteins, thereby contributing to elongation of O-fucosylglycan. This chain is Beta-1,3-glucosyltransferase, found in Mus musculus (Mouse).